We begin with the raw amino-acid sequence, 206 residues long: Small ribosomal subunit protein uS4 (206 aa).

Positions 96–156 constitute an S4 RNA-binding domain; it reads GRLDNVVYRM…EKSKKQARIK (61 aa).

Belongs to the universal ribosomal protein uS4 family. Part of the 30S ribosomal subunit. Contacts protein S5. The interaction surface between S4 and S5 is involved in control of translational fidelity.

Functionally, one of the primary rRNA binding proteins, it binds directly to 16S rRNA where it nucleates assembly of the body of the 30S subunit. Its function is as follows. With S5 and S12 plays an important role in translational accuracy. This chain is Small ribosomal subunit protein uS4, found in Histophilus somni (strain 129Pt) (Haemophilus somnus).